Consider the following 222-residue polypeptide: UPF0441 protein CKO_04429 (222 aa).

Residues 177–194 show a composition bias toward low complexity; sequence TVPKTAMAPKPATTTTVT. The tract at residues 177–222 is disordered; it reads TVPKTAMAPKPATTTTVTRGGFGESVAKQSTMQRSATGTSNRSMGG. Over residues 203–222 the composition is skewed to polar residues; sequence AKQSTMQRSATGTSNRSMGG.

The protein belongs to the UPF0441 family.

This Citrobacter koseri (strain ATCC BAA-895 / CDC 4225-83 / SGSC4696) protein is UPF0441 protein CKO_04429.